Consider the following 282-residue polypeptide: ATP synthase gamma chain (282 aa).

It belongs to the ATPase gamma chain family. F-type ATPases have 2 components, CF(1) - the catalytic core - and CF(0) - the membrane proton channel. CF(1) has five subunits: alpha(3), beta(3), gamma(1), delta(1), epsilon(1). CF(0) has three main subunits: a, b and c.

Its subcellular location is the cell membrane. Its function is as follows. Produces ATP from ADP in the presence of a proton gradient across the membrane. The gamma chain is believed to be important in regulating ATPase activity and the flow of protons through the CF(0) complex. This Clostridium botulinum (strain ATCC 19397 / Type A) protein is ATP synthase gamma chain.